The primary structure comprises 301 residues: Ornithine carbamoyltransferase (301 aa).

Carbamoyl phosphate is bound by residues R100 and 127 to 130; that span reads HPCQ. Residues N158, D221, and 225 to 226 each bind L-ornithine; that span reads SM. 2 residues coordinate carbamoyl phosphate: C260 and R288.

It belongs to the aspartate/ornithine carbamoyltransferase superfamily. OTCase family. As to quaternary structure, homododecamer.

The protein localises to the cytoplasm. The catalysed reaction is carbamoyl phosphate + L-ornithine = L-citrulline + phosphate + H(+). The protein operates within amino-acid biosynthesis; L-arginine biosynthesis; L-arginine from L-ornithine and carbamoyl phosphate: step 1/3. Its function is as follows. Reversibly catalyzes the transfer of the carbamoyl group from carbamoyl phosphate (CP) to the N(epsilon) atom of ornithine (ORN) to produce L-citrulline. The chain is Ornithine carbamoyltransferase (argF) from Moritella profunda.